A 330-amino-acid chain; its full sequence is Phosphate acyltransferase (330 aa).

The protein belongs to the PlsX family. As to quaternary structure, homodimer. Probably interacts with PlsY.

The protein resides in the cytoplasm. It carries out the reaction a fatty acyl-[ACP] + phosphate = an acyl phosphate + holo-[ACP]. Its pathway is lipid metabolism; phospholipid metabolism. Catalyzes the reversible formation of acyl-phosphate (acyl-PO(4)) from acyl-[acyl-carrier-protein] (acyl-ACP). This enzyme utilizes acyl-ACP as fatty acyl donor, but not acyl-CoA. The protein is Phosphate acyltransferase of Streptococcus agalactiae serotype Ia (strain ATCC 27591 / A909 / CDC SS700).